Reading from the N-terminus, the 245-residue chain is Protein mlo1 (245 aa).

Positions 4–38 (YKSLKVAELREKLAEKGLSTAGNKAELVSRLTAAT) constitute an SAP domain. The interval 32-245 (SRLTAATESN…AERFGVAAKN (214 aa)) is disordered. The span at 37–52 (ATESNDENTSNNNATD) shows a compositional bias: low complexity. Over residues 58–70 (PPEDDIDWGDMEN) the composition is skewed to acidic residues. The span at 109 to 118 (TSQAPETSTG) shows a compositional bias: polar residues. The span at 119–130 (AEEHQETTEESK) shows a compositional bias: basic and acidic residues. Serine 139 is modified (phosphoserine). Low complexity predominate over residues 182 to 196 (SSNNKNHNQSKNPQN).

This sequence belongs to the SAP domain-containing ribonucleoprotein family.

This Schizosaccharomyces pombe (strain 972 / ATCC 24843) (Fission yeast) protein is Protein mlo1 (mlo1).